Here is a 268-residue protein sequence, read N- to C-terminus: Thiazole synthase (268 aa).

Residue lysine 100 is the Schiff-base intermediate with DXP of the active site. 1-deoxy-D-xylulose 5-phosphate-binding positions include glycine 161, 187-188 (AG), and 209-210 (NT). Residues 248–268 (ASPSSPAEGMFTGTQHPAANS) form a disordered region. A compositionally biased stretch (polar residues) spans 259–268 (TGTQHPAANS).

This sequence belongs to the ThiG family. As to quaternary structure, homotetramer. Forms heterodimers with either ThiH or ThiS.

It localises to the cytoplasm. It carries out the reaction [ThiS sulfur-carrier protein]-C-terminal-Gly-aminoethanethioate + 2-iminoacetate + 1-deoxy-D-xylulose 5-phosphate = [ThiS sulfur-carrier protein]-C-terminal Gly-Gly + 2-[(2R,5Z)-2-carboxy-4-methylthiazol-5(2H)-ylidene]ethyl phosphate + 2 H2O + H(+). It participates in cofactor biosynthesis; thiamine diphosphate biosynthesis. Its function is as follows. Catalyzes the rearrangement of 1-deoxy-D-xylulose 5-phosphate (DXP) to produce the thiazole phosphate moiety of thiamine. Sulfur is provided by the thiocarboxylate moiety of the carrier protein ThiS. In vitro, sulfur can be provided by H(2)S. This is Thiazole synthase from Nitrosomonas europaea (strain ATCC 19718 / CIP 103999 / KCTC 2705 / NBRC 14298).